We begin with the raw amino-acid sequence, 189 residues long: Protein seele (189 aa).

The N-terminal stretch at 1 to 17 (MLTKALILFGLLALAQG) is a signal peptide. Residues 23–176 (REVKCHVCKA…EQASYCDESP (154 aa)) enclose the Saposin B-type domain. Intrachain disulfides connect C27–C172, C30–C165, and C85–C136. Positions 186 to 189 (KEEL) match the Prevents secretion from ER motif.

The protein belongs to the canopy family.

Its subcellular location is the endoplasmic reticulum. In terms of biological role, involved in embryonic dorsal-ventral patterning which is generated by a series of serine protease processing events where gd processes snk which cleaves ea which then processes spz into the activating ligand for the Toll receptor. Required during this process for the secretion of ea from the developing embryo into the perivitelline space and for ea processing. This Drosophila melanogaster (Fruit fly) protein is Protein seele.